The primary structure comprises 461 residues: Cysteine--tRNA ligase (461 aa).

A Zn(2+)-binding site is contributed by cysteine 28. The short motif at 30–40 is the 'HIGH' region element; it reads ITVYDLCHIGH. Residues cysteine 209, histidine 234, and glutamate 238 each coordinate Zn(2+). Positions 266–270 match the 'KMSKS' region motif; that stretch reads KMSKS. Residue lysine 269 coordinates ATP.

The protein belongs to the class-I aminoacyl-tRNA synthetase family. In terms of assembly, monomer. The cofactor is Zn(2+).

The protein resides in the cytoplasm. It carries out the reaction tRNA(Cys) + L-cysteine + ATP = L-cysteinyl-tRNA(Cys) + AMP + diphosphate. The sequence is that of Cysteine--tRNA ligase from Salmonella dublin (strain CT_02021853).